Here is a 1368-residue protein sequence, read N- to C-terminus: Inactive tyrosine-protein kinase PRAG1 (1368 aa).

The disordered stretch occupies residues 200-236 (CLKGPRPCTSPQPLRESLPSEDDSDQRCSPSGDSEGG). Tyrosine 238 carries the phosphotyrosine; by CSK modification. Residues 297 to 330 (STANPPHLGPKKPSLNSEAASSSDGLSCGSSRSG) form a disordered region. Positions 317 to 330 (SSSDGLSCGSSRSG) are enriched in low complexity. 2 positions are modified to phosphotyrosine; by CSK: tyrosine 343 and tyrosine 391. 3 disordered regions span residues 392 to 443 (AESA…PNAA), 499 to 605 (LSSR…GAWS), and 636 to 792 (HSNS…KKIV). The span at 414 to 434 (VSSGQVWTGDTWSQKTPSGWS) shows a compositional bias: polar residues. Over residues 502–518 (RESHPHNMTENSSKEKP) the composition is skewed to basic and acidic residues. Composition is skewed to low complexity over residues 522–535 (PKLSKSSPGGSPVS) and 550–563 (SGSSVGSQPSSRVP). 2 stretches are compositionally biased toward polar residues: residues 564 to 574 (TNLTSSCQTNG) and 652 to 666 (SGQNGKTNSGMSKSA). Phosphoserine is present on residues serine 667 and serine 716. 2 stretches are compositionally biased toward polar residues: residues 707 to 717 (VSQSSAESLSP) and 725 to 741 (SFTTGSTDSLASDSRTC). Serine 753 and serine 797 each carry phosphoserine. Disordered stretches follow at residues 799–818 (PDGFFWTQGSPKPRTASPKL) and 873–901 (NSKGGCGSPNLQGRAATSTSSSQLSVSSQ). Residues 887–901 (AATSTSSSQLSVSSQ) show a composition bias toward low complexity. The required for homodimerization stretch occupies residues 906–949 (SSQLQLHSLLSSISSKEGTYAKLGGLYTQSLARLVTKCEDLFMG). One can recognise a Protein kinase domain in the interval 940–1291 (VTKCEDLFMG…EAKRVLQCLL (352 aa)). The span at 1134–1144 (SSPGPSANPSV) shows a compositional bias: polar residues. The tract at residues 1134–1166 (SSPGPSANPSVPTTTSRCPSAAPAATTACQGGP) is disordered. A compositionally biased stretch (low complexity) spans 1145–1162 (PTTTSRCPSAAPAATTAC). The interval 1293–1368 (GPRRELVEQP…LQSLKLLQLL (76 aa)) is required for homodimerization.

The protein belongs to the protein kinase superfamily. In terms of assembly, homodimer. Dimerization leads to the catalytic activation of CSK. Interacts (via C-terminus) with RND2. Interacts with CSK (via SH2 domain) in a Tyr-391 phosphorylation-dependent manner; this interaction potentiates kinase activity of CSK. Interacts with NOTCH1 intracellular domain (N1ICD). Forms a complex with N1ICD and MAML1, in a MAML1-dependent manner. Phosphorylated by CSK on Tyr-238, Tyr-343, and Tyr-391; Tyr-391 is a primary site of phosphorylation. As to expression, highly-expressed in brain, including cortical and hippocampal pyramidal neurons, as well as in kidney, spleen, colon and small intestine.

The protein localises to the cytoplasm. The protein resides in the nucleus. Its subcellular location is the cell junction. It localises to the focal adhesion. In terms of biological role, catalytically inactive protein kinase that acts as a scaffold protein. Functions as an effector of the small GTPase RND2, which stimulates RhoA activity and inhibits NGF-induced neurite outgrowth. Promotes Src family kinase (SFK) signallig by regulating the subcellular localization of CSK, a negative regulator of these kinases, leading to the regulation of cell morphology and motility by a CSK-dependent mechanism. Acts as a critical coactivator of Notch signaling. The polypeptide is Inactive tyrosine-protein kinase PRAG1 (Rattus norvegicus (Rat)).